Reading from the N-terminus, the 249-residue chain is Phosphate import ATP-binding protein PstB (249 aa).

In terms of domain architecture, ABC transporter spans 4–244 (VKIKDLSLFY…PQDKRTEDYI (241 aa)). 36–43 (GPSGCGKS) is an ATP binding site.

Belongs to the ABC transporter superfamily. Phosphate importer (TC 3.A.1.7) family. As to quaternary structure, the complex is composed of two ATP-binding proteins (PstB), two transmembrane proteins (PstC and PstA) and a solute-binding protein (PstS).

It localises to the cell membrane. It carries out the reaction phosphate(out) + ATP + H2O = ADP + 2 phosphate(in) + H(+). Functionally, part of the ABC transporter complex PstSACB involved in phosphate import. Responsible for energy coupling to the transport system. This is Phosphate import ATP-binding protein PstB from Clostridium tetani (strain Massachusetts / E88).